The chain runs to 105 residues: Large ribosomal subunit protein uL24 (105 aa).

The disordered stretch occupies residues 75–105; that stretch reads DSDGNPTRVGYRTDEESGKRVRISRKNGKDI. A compositionally biased stretch (basic residues) spans 94-105; it reads RVRISRKNGKDI.

This sequence belongs to the universal ribosomal protein uL24 family. As to quaternary structure, part of the 50S ribosomal subunit.

One of two assembly initiator proteins, it binds directly to the 5'-end of the 23S rRNA, where it nucleates assembly of the 50S subunit. In terms of biological role, one of the proteins that surrounds the polypeptide exit tunnel on the outside of the subunit. This Rhodococcus jostii (strain RHA1) protein is Large ribosomal subunit protein uL24.